The chain runs to 1002 residues: BLOC-2 complex member HPS3 (1002 aa).

The segment at 218–239 (GESVDHHPQETSNPLKEAEGVS) is disordered.

In terms of assembly, component of the biogenesis of lysosome-related organelles complex-2 (or BLOC2) composed of HPS3, HPS5 and HPS6. Interacts with HPS5 and HPS6. Found in heart, brain, spleen, liver, lung, kidney and testis.

The protein localises to the cytoplasm. It localises to the cytosol. Functionally, involved in early stages of melanosome biogenesis and maturation. This is BLOC-2 complex member HPS3 (Hps3) from Mus musculus (Mouse).